Here is a 431-residue protein sequence, read N- to C-terminus: MAVGAAAVTEVGDTASPVGSSGASGGAIASGSVARVGTATAVTALCGYAVIYLAARNLAPNGFSVFGVFWGAFGLVTGAANGLLQETTREVRSLGYLDVSADGRRTHPLRVSGMVGLGSLVVIAGSSPLWSGRVFAEARWLSVALLSIGLAGFCLHATLLGMLAGTNRWTQYGALMVADAVIRVVVAAATFVIGWQLVGFIWATVAGSVAWLIMLMTSPPTRAAARLMTPGATATFLRGAAHSIIAAGASAILVMGFPVLLKLTSNELGAQGGVVILAVTLTRAPLLVPLTAMQGNLIAHFVDERTERIRALIAPAALIGGVGAVGMLAAGVVGPWIMRVAFGSEYQSSSALLAWLTAAAVAIAMLTLTGAAAVAAALHRAYSLGWVGATVGSGLLLLLPLSLETRTVVALLCGPLVGIGVHLVALARTDE.

Transmembrane regions (helical) follow at residues 33 to 53 (VARVGTATAVTALCGYAVIYL), 63 to 83 (FSVFGVFWGAFGLVTGAANGL), 111 to 131 (VSGMVGLGSLVVIAGSSPLWS), 143 to 163 (VALLSIGLAGFCLHATLLGML), 197 to 217 (LVGFIWATVAGSVAWLIMLMT), 241 to 261 (AHSIIAAGASAILVMGFPVLL), 273 to 293 (GVVILAVTLTRAPLLVPLTAM), 318 to 338 (LIGGVGAVGMLAAGVVGPWIM), 358 to 378 (AAAVAIAMLTLTGAAAVAAAL), 383 to 403 (SLGWVGATVGSGLLLLLPLSL), and 407 to 427 (TVVALLCGPLVGIGVHLVALA).

It to M.tuberculosis Rv1510 and Rv3630.

The protein resides in the cell membrane. This is an uncharacterized protein from Mycobacterium bovis (strain ATCC BAA-935 / AF2122/97).